Here is an 871-residue protein sequence, read N- to C-terminus: DNA mismatch repair protein MutS (871 aa).

616 to 623 is an ATP binding site; it reads GPNMAGKS. The disordered stretch occupies residues 801 to 825; the sequence is ETEKTEESMEGTNLPKKKKEEKTSS.

It belongs to the DNA mismatch repair MutS family.

In terms of biological role, this protein is involved in the repair of mismatches in DNA. It is possible that it carries out the mismatch recognition step. This protein has a weak ATPase activity. In Clostridium kluyveri (strain NBRC 12016), this protein is DNA mismatch repair protein MutS.